The sequence spans 813 residues: MVALLLFPMLLQLLSPTCAQTQKNITLGSTLAPQSPASSWLSPSGDFAFGFRPVEGNTSFYLIAVWFNKISDKTVVWYAKNTDQDPSIVEVPSDSFLQLTNDGALSLKDRSGQEGWNPQVTSVAYASMRDTGNFVLLGADGTTKWQTFDMPSDTILPTQVIPCNKTRNKSLRARLDINDYSSGRFLLDVQTDGNLALYLVAVPSGSKYQQYWSTDTTGNGSELVFSETGKVYFALTDGTQINISSGAGIGSMADYFHRATLDPDGVFRQYVYPKKANAGILGGETWTAVSMQPQNICHAIVSDVGSGVCGFNSYCTFDGTRNQIASCQCPPWYKFFDEQKKYKGCKQDFQPHSCDLDEATALAQFELRPIYGVDWPLSDYEKYEPIGQDDCGRLCVIDCFCAMAVYNQSTSTCWKKKLPLSNGNMADYVQRTVLLKVPSSNSSQSMISTSSNKWKRNRKHWVLGSSLILGTSILVNFALISIFLFGTYCRIATKKNIPLSQASSKSQLPLKTFTYKELEKATAGFHEILGAGASGVVYKGQLEDELKTNIAVKKIDKLQPETEKEFMVEVETIGQTFHKNLVRLLGFCNEGAERLLVYEFMTNGPLNRLLFDNSRPHWNTRVHIALGVARGLLYLHDECSKQIIHCDIKPQNILLDDNLVAKISDFGLAKLLLTNQTRTNTGIRGTRGYVAPEWFKNIGISTKVDVYSFGVILLELVCCRRNVELEVVDEEQTIVTYWANDCYRSGRIDLLVEGDDEAIYNIKKVERFVTVALWCLQEDPSMRPNMLKVTQMLDGAVAIPSPPDPCSFISSLP.

The signal sequence occupies residues Met1–Ala19. Residues Gln20–Ser466 are Extracellular-facing. The Bulb-type lectin domain maps to Gln22 to Asp149. Residues Asn24, Asn57, Asn164, Asn168, Asn219, and Asn242 are each glycosylated (N-linked (GlcNAc...) asparagine). Positions Pro293–Lys346 constitute an EGF-like; atypical domain. Disulfide bonds link Cys297/Cys315, Cys309/Cys327, Cys329/Cys345, Cys391/Cys413, and Cys395/Cys401. Positions Cys354–Val433 constitute a PAN domain. Residues Asn407 and Asn441 are each glycosylated (N-linked (GlcNAc...) asparagine). Residues Leu467–Thr487 form a helical membrane-spanning segment. Residues Tyr488–Pro813 are Cytoplasmic-facing. The Protein kinase domain occupies Ala523–Val797. ATP is bound by residues Leu529–Val537 and Lys553. Asp647 serves as the catalytic Proton acceptor.

Belongs to the protein kinase superfamily. Ser/Thr protein kinase family.

Its subcellular location is the membrane. It catalyses the reaction L-seryl-[protein] + ATP = O-phospho-L-seryl-[protein] + ADP + H(+). It carries out the reaction L-threonyl-[protein] + ATP = O-phospho-L-threonyl-[protein] + ADP + H(+). Functionally, involved in innate immunity. Required for the expression of defense-related genes PR1A, LOX2 and CHS1 upon biotic stresses. Required for basal resistance to the fungal blast (M.grisea), bacterial blight (X.oryzae pv. oryzae, Xoo) and the herbivorous insect brown planthopper (N.lugens, BPH). May be involved in several defense signaling pathways. Involved in the promotion of seed germination. Required for the expression of alpha-amylase genes during seed germination. Involved in resistance against the herbivorous insect brown planthopper (N.lugens, BPH). Member of the BPH3 (BPH resistance locus 3) cluster which contains LECRK1, LECRK2 and LECRK3. This is G-type lectin S-receptor-like serine/threonine-protein kinase LECRK1 from Oryza sativa subsp. japonica (Rice).